We begin with the raw amino-acid sequence, 602 residues long: Protein nessun dorma (602 aa).

Positions 188–208 (AEAKYIQQRLDYLELDLSDAE) form a coiled coil.

As to quaternary structure, interacts (via N-terminus) with both members of the centralspindlin complex, Pav and Tum. In terms of tissue distribution, detected in testis (at protein level). Also expressed in ovary.

It localises to the midbody. Its function is as follows. Required during male meiosis for completion of spermatocyte cytokinesis and possibly also required in female germline cells. Also involved in ring canal formation in male and female germline cells. Not essential for cleavage furrow ingression but is required for contractile ring stability and the attachment of the furrowing membrane to the actomyosin ring in late telophase. Displays high binding affinity for beta-galactosides. The protein is Protein nessun dorma of Drosophila melanogaster (Fruit fly).